We begin with the raw amino-acid sequence, 312 residues long: 1-(5-phosphoribosyl)-5-[(5-phosphoribosylamino)methylideneamino] imidazole-4-carboxamide isomerase HISN3, chloroplastic (312 aa).

A chloroplast-targeting transit peptide spans methionine 1–valine 67. 1-(5-phospho-beta-D-ribosyl)-5-[(5-phospho-beta-D-ribosylamino)methylideneamino]imidazole-4-carboxamide is bound at residue aspartate 57. Glutamine 65 contributes to the 5-[(5-phospho-1-deoxy-D-ribulos-1-ylimino)methylamino]-1-(5-phospho-beta-D-ribosyl)imidazole-4-carboxamide binding site. 2 residues coordinate Na(+): glutamine 65 and isoleucine 66. Position 68 (glycine 68) interacts with 1-(5-phospho-beta-D-ribosyl)-5-[(5-phospho-beta-D-ribosylamino)methylideneamino]imidazole-4-carboxamide. 5-[(5-phospho-1-deoxy-D-ribulos-1-ylimino)methylamino]-1-(5-phospho-beta-D-ribosyl)imidazole-4-carboxamide-binding residues include histidine 108, glycine 138, threonine 158, and serine 159. Glycine 138, threonine 158, and serine 159 together coordinate 1-(5-phospho-beta-D-ribosyl)-5-[(5-phospho-beta-D-ribosylamino)methylideneamino]imidazole-4-carboxamide. Na(+)-binding residues include serine 159 and phenylalanine 162. 1-(5-phospho-beta-D-ribosyl)-5-[(5-phospho-beta-D-ribosylamino)methylideneamino]imidazole-4-carboxamide-binding residues include aspartate 187, arginine 203, tryptophan 204, and histidine 230. Aspartate 187 contributes to the 5-[(5-phospho-1-deoxy-D-ribulos-1-ylimino)methylamino]-1-(5-phospho-beta-D-ribosyl)imidazole-4-carboxamide binding site. Tryptophan 204 contributes to the 5-[(5-phospho-1-deoxy-D-ribulos-1-ylimino)methylamino]-1-(5-phospho-beta-D-ribosyl)imidazole-4-carboxamide binding site. Glutamate 235 provides a ligand contact to Na(+). Residues glycine 236, glycine 262, glycine 285, and serine 286 each contribute to the 1-(5-phospho-beta-D-ribosyl)-5-[(5-phospho-beta-D-ribosylamino)methylideneamino]imidazole-4-carboxamide site. Residues glycine 236, glycine 262, glycine 285, and serine 286 each coordinate 5-[(5-phospho-1-deoxy-D-ribulos-1-ylimino)methylamino]-1-(5-phospho-beta-D-ribosyl)imidazole-4-carboxamide.

Belongs to the HisA/HisF family. Na(+) serves as cofactor.

Its subcellular location is the plastid. The protein resides in the chloroplast. The enzyme catalyses 1-(5-phospho-beta-D-ribosyl)-5-[(5-phospho-beta-D-ribosylamino)methylideneamino]imidazole-4-carboxamide = 5-[(5-phospho-1-deoxy-D-ribulos-1-ylimino)methylamino]-1-(5-phospho-beta-D-ribosyl)imidazole-4-carboxamide. The protein operates within amino-acid biosynthesis; L-histidine biosynthesis; L-histidine from 5-phospho-alpha-D-ribose 1-diphosphate: step 4/9. Functionally, component of the histidine biosynthesis pathway that catalyzes the isomerization of 5'-ProFAR (pro-phosphoribosyl formimino-5-aminoimidazole-4-carboxamide ribonucleotide, referred as 1-(5-phospho-beta-D-ribosyl)-5-[(5-phospho-beta-D-ribosylamino)methylideneamino]imidazole-4-carboxamide) to PrFAR (phosphoribulosyl formimino-5-aminoimidazole-4-carboxamide ribonucleotide, referred as 5-[(5-phospho-1-deoxy-D-ribulos-1-ylimino)methylamino]-1-(5-phospho-beta-D-ribosyl)imidazole-4-carboxamide). This is 1-(5-phosphoribosyl)-5-[(5-phosphoribosylamino)methylideneamino] imidazole-4-carboxamide isomerase HISN3, chloroplastic from Medicago truncatula (Barrel medic).